The sequence spans 1819 residues: Protein REDUCED CHLOROPLAST COVERAGE 2 (1819 aa).

Residues 1-17 (MAPKAGKTKPHKSKGEK) are compositionally biased toward basic residues. Disordered stretches follow at residues 1-23 (MAPKAGKTKPHKSKGEKKKKEEK), 128-180 (KPPV…GACE), 595-619 (QASSKSESKKTEDPKPEPAVKGLGK), and 634-664 (KANKTEQGKEAPANDTDNTSETEDQKELEKQ). Composition is skewed to basic and acidic residues over residues 135–145 (LPKDSEKKESG) and 600–612 (SESKKTEDPKPEP). Positions 329–603 (EDETWGGDGG…NQASSKSESK (275 aa)) constitute a Clu domain. The stretch at 649 to 680 (TDNTSETEDQKELEKQNEEIEKMWKELVTETA) forms a coiled coil. TPR repeat units lie at residues 892–925 (GRTLLESSKTSLDKGKLEDAVNYGTKALAKLVAV), 934–967 (AGAYSLLAVVLYHTGDFNQATIYQQKALDINERE), 976–1009 (MKSYGDLAVFYYRLQHTELALKYVNRALYLLHLT), 1018–1051 (AATYINVAMMEEGMKNAHVALRYLHEALKCNQRL), and 1060–1093 (AASYHAIAIALSLMDAYSLSVQHEQTTLQILQAK). Disordered stretches follow at residues 1152-1360 (SGIK…PMLS), 1413-1456 (KVNA…SPKE), 1468-1513 (KAFP…SESV), 1527-1573 (LKTV…ASAP), 1616-1670 (STPH…PRIM), and 1731-1809 (LVSE…DYSD). Basic and acidic residues-rich tracts occupy residues 1199–1224 (SSDKENKSETKSEEKKVENFDLEQSK) and 1230–1239 (KLVKPEATVH). At S1244 the chain carries Phosphoserine. Residues 1269-1313 (KLNTNFMNVTQQPSRSRGKSTNFTSPRTSSNELSISVAGSTSSPA) are compositionally biased toward polar residues. A Phosphoserine modification is found at S1320. Residues 1343 to 1354 (LASSACTEQINK) are compositionally biased toward polar residues. 2 stretches are compositionally biased toward polar residues: residues 1496 to 1511 (CLLNKSPTANDSNGSE) and 1536 to 1546 (NLPNGDSSPKS). A compositionally biased stretch (basic and acidic residues) spans 1551–1566 (DGEKQDACEAQKEMSK). The span at 1650-1665 (SFPNSTESNGEANQFN) shows a compositional bias: polar residues. Basic and acidic residues predominate over residues 1742-1759 (SEEKSGSEEESNNDKNAG). Over residues 1767–1778 (QETTDTPENGHS) the composition is skewed to polar residues. The segment covering 1785 to 1800 (TTSHETCDEKNGERQG) has biased composition (basic and acidic residues).

In terms of tissue distribution, expressed in the non-epidermal tissues of the true leaves. Not detected in the vegetative shoot meristem and leaf primordia.

Its subcellular location is the nucleus. It is found in the cytoplasm. The protein localises to the cytosol. In terms of biological role, negatively regulates meristematic tissue proliferation by integrating developmental signals with carbon source availability. May act as the scaffold of a protein complex, which sequesters key factors that are required for the G2 to M transition in meristematic tissues. Together with REC2, REC3 and FMT/CLU, contributes to the establishment of the cellular volume devoted to the chloroplast compartment. This Arabidopsis thaliana (Mouse-ear cress) protein is Protein REDUCED CHLOROPLAST COVERAGE 2.